The sequence spans 363 residues: 3-isopropylmalate dehydrogenase (363 aa).

Residue 79-92 (GPKWEHLPPNDQPE) coordinates NAD(+). 4 residues coordinate substrate: Arg-100, Arg-110, Arg-139, and Asp-228. Mg(2+) contacts are provided by Asp-228, Asp-252, and Asp-256. 286–298 (GSAPDIAGKNIAN) provides a ligand contact to NAD(+).

This sequence belongs to the isocitrate and isopropylmalate dehydrogenases family. LeuB type 1 subfamily. Homodimer. Mg(2+) is required as a cofactor. It depends on Mn(2+) as a cofactor.

The protein localises to the cytoplasm. It carries out the reaction (2R,3S)-3-isopropylmalate + NAD(+) = 4-methyl-2-oxopentanoate + CO2 + NADH. It functions in the pathway amino-acid biosynthesis; L-leucine biosynthesis; L-leucine from 3-methyl-2-oxobutanoate: step 3/4. Functionally, catalyzes the oxidation of 3-carboxy-2-hydroxy-4-methylpentanoate (3-isopropylmalate) to 3-carboxy-4-methyl-2-oxopentanoate. The product decarboxylates to 4-methyl-2 oxopentanoate. This is 3-isopropylmalate dehydrogenase from Vibrio parahaemolyticus serotype O3:K6 (strain RIMD 2210633).